We begin with the raw amino-acid sequence, 258 residues long: Tryptophan synthase alpha chain (258 aa).

Residues glutamate 47 and aspartate 58 each act as proton acceptor in the active site.

Belongs to the TrpA family. In terms of assembly, tetramer of two alpha and two beta chains.

The catalysed reaction is (1S,2R)-1-C-(indol-3-yl)glycerol 3-phosphate + L-serine = D-glyceraldehyde 3-phosphate + L-tryptophan + H2O. Its pathway is amino-acid biosynthesis; L-tryptophan biosynthesis; L-tryptophan from chorismate: step 5/5. Functionally, the alpha subunit is responsible for the aldol cleavage of indoleglycerol phosphate to indole and glyceraldehyde 3-phosphate. The chain is Tryptophan synthase alpha chain from Bacillus thuringiensis (strain Al Hakam).